The following is a 128-amino-acid chain: Large ribosomal subunit protein eL32 (128 aa).

This sequence belongs to the eukaryotic ribosomal protein eL32 family.

The sequence is that of Large ribosomal subunit protein eL32 (rpl32e) from Thermoplasma volcanium (strain ATCC 51530 / DSM 4299 / JCM 9571 / NBRC 15438 / GSS1).